The chain runs to 137 residues: 2-iminobutanoate/2-iminopropanoate deaminase (137 aa).

The residue at position 2 (S2) is an N-acetylserine. An N6-succinyllysine mark is found at K13, K60, and K67. Residue T74 is modified to Phosphothreonine. S136 carries the phosphoserine modification.

The protein belongs to the RutC family. Homotrimer. Interacts with YTHDF2. Expressed predominantly in liver and kidney. Lower levels in lung and brain.

The protein resides in the cytoplasm. It is found in the nucleus. It localises to the peroxisome. Its subcellular location is the mitochondrion. The enzyme catalyses 2-iminobutanoate + H2O = 2-oxobutanoate + NH4(+). It catalyses the reaction 2-iminopropanoate + H2O = pyruvate + NH4(+). Catalyzes the hydrolytic deamination of enamine/imine intermediates that form during the course of normal metabolism. May facilitate the release of ammonia from these potentially toxic reactive metabolites, reducing their impact on cellular components. It may act on enamine/imine intermediates formed by several types of pyridoxal-5'-phosphate-dependent dehydratases including L-threonine dehydratase. In terms of biological role, also promotes endoribonucleolytic cleavage of some transcripts by promoting recruitment of the ribonuclease P/MRP complex. Acts by bridging YTHDF2 and the ribonuclease P/MRP complex. RIDA/HRSP12 binds to N6-methyladenosine (m6A)-containing mRNAs containing a 5'-GGUUC-3' motif: cooperative binding of RIDA/HRSP12 and YTHDF2 to such transcripts lead to recruitment of the ribonuclease P/MRP complex and subsequent endoribonucleolytic cleavage. This chain is 2-iminobutanoate/2-iminopropanoate deaminase, found in Homo sapiens (Human).